Reading from the N-terminus, the 426-residue chain is Glucan 1,3-beta-glucosidase (426 aa).

Positions 1 to 20 (MLYPRALLPAAVALASLVLA) are cleaved as a signal peptide. Glu208 (proton donor) is an active-site residue. 2 disulfide bridges follow: Cys290–Cys416 and Cys315–Cys343. Glu307 functions as the Nucleophile in the catalytic mechanism.

Belongs to the glycosyl hydrolase 5 (cellulase A) family.

It is found in the secreted. The enzyme catalyses Successive hydrolysis of beta-D-glucose units from the non-reducing ends of (1-&gt;3)-beta-D-glucans, releasing alpha-glucose.. Its function is as follows. Beta-glucanases participate in the metabolism of beta-glucan, the main structural component of the cell wall. It could also function biosynthetically as a transglycosylase. The sequence is that of Glucan 1,3-beta-glucosidase from Blumeria graminis (Powdery mildew).